Here is a 149-residue protein sequence, read N- to C-terminus: Large ribosomal subunit protein uL15 (149 aa).

Positions 1-54 are disordered; it reads MSLKLHNLKPTPNSRPEKHRKGRGHAAGKGKQAGKGQSGQNKRKGHRLGFEGGQ. Residues 17–28 show a composition bias toward basic residues; it reads EKHRKGRGHAAG.

The protein belongs to the universal ribosomal protein uL15 family. Part of the 50S ribosomal subunit.

In terms of biological role, binds to the 23S rRNA. The sequence is that of Large ribosomal subunit protein uL15 from Mycoplasmopsis synoviae (strain 53) (Mycoplasma synoviae).